Reading from the N-terminus, the 436-residue chain is MKVALIHSRDDVAGCTIRRHIEQCLDDAHGSANGRTYEFVEVGGRLINAEGVDATLDVNLVIFLSRHSSVNPVPVLTVHATGNFGAAELGGSPRTLAPAAPAMMQATLRALARYCPEGYRVSYEVTHHGPTGLSHPSFFVEIGSTEKEWVDPVAGRAVAEAVLGADPAGAVPLIGIGGTHYAPRETAIALSSRGAFGHIASSRLQVALLDRELVQAMVVQSRAVAAYIDRKAVLPGDVSRISAILDELGIPRLSETEITSLGHLAWEAYREVRALAATVGPQTRCFIHALEGTGPLVLVSLDPVLLSEAKRCDESALVQRFGPLPVAHLATEDNVLLPQFVAFERNSSKIINDLNTLCVKIIRNRESTATENDYLVIRKVRFDPQKARELGVPAGPAYRQLAAGQAVEYDGQIITPDRVSVATETRIHIPGLENYS.

Belongs to the DtdA deacylase family. Monomer. Requires Zn(2+) as cofactor.

The catalysed reaction is a D-aminoacyl-tRNA + H2O = a tRNA + a D-alpha-amino acid + H(+). It carries out the reaction glycyl-tRNA(Ala) + H2O = tRNA(Ala) + glycine + H(+). Functionally, D-aminoacyl-tRNA deacylase with broad substrate specificity. By recycling D-aminoacyl-tRNA to D-amino acids and free tRNA molecules, this enzyme counteracts the toxicity associated with the formation of D-aminoacyl-tRNA entities in vivo. This is D-aminoacyl-tRNA deacylase from Methanoregula boonei (strain DSM 21154 / JCM 14090 / 6A8).